The primary structure comprises 203 residues: Small ribosomal subunit protein uS4 (203 aa).

One can recognise an S4 RNA-binding domain in the interval 93 to 153 (QRLDSLVYRL…DKSKNIVPIQ (61 aa)).

The protein belongs to the universal ribosomal protein uS4 family. In terms of assembly, part of the 30S ribosomal subunit. Contacts protein S5. The interaction surface between S4 and S5 is involved in control of translational fidelity.

Functionally, one of the primary rRNA binding proteins, it binds directly to 16S rRNA where it nucleates assembly of the body of the 30S subunit. Its function is as follows. With S5 and S12 plays an important role in translational accuracy. This chain is Small ribosomal subunit protein uS4, found in Leuconostoc citreum (strain KM20).